Consider the following 1209-residue polypeptide: Protein phosphatase 1 regulatory subunit 26 (1209 aa).

Disordered stretches follow at residues Asp-57–Lys-91, Ser-145–Gly-279, Lys-291–Ser-471, Gly-501–Asp-532, Gly-555–Asp-694, Glu-733–Ser-836, Lys-848–Gln-1033, Arg-1052–Ser-1072, and Ala-1118–Val-1209. The span at Thr-63 to Lys-91 shows a compositional bias: basic and acidic residues. A compositionally biased stretch (low complexity) spans Gln-201–Asp-219. Residues Ile-226–Thr-255 are compositionally biased toward basic and acidic residues. Residues Gln-301 to Pro-321 show a composition bias toward polar residues. The segment covering Ser-352–Ser-362 has biased composition (low complexity). The span at Asp-442 to Lys-454 shows a compositional bias: basic and acidic residues. Basic and acidic residues-rich tracts occupy residues Lys-609–Leu-637, Lys-667–Ser-685, and Ser-757–Gly-766. Composition is skewed to low complexity over residues Pro-821 to Ser-836 and Ser-852 to Glu-861. The residue at position 1161 (Ser-1161) is a Phosphoserine. Residues Gly-1187–Val-1209 show a composition bias toward low complexity.

Interacts with UTP20 and PPP1CA. In terms of tissue distribution, ubiquitous in normal tissues. Expressed in numerous adenocarcinoma cell lines.

The protein localises to the nucleus. The protein resides in the nucleolus. Its function is as follows. Inhibits phosphatase activity of protein phosphatase 1 (PP1) complexes. May positively regulate cell proliferation. The sequence is that of Protein phosphatase 1 regulatory subunit 26 (PPP1R26) from Homo sapiens (Human).